The primary structure comprises 213 residues: High frequency lysogenization protein HflD homolog (213 aa).

Residues 79–126 (QGLNAELTRYTLSLMVLERKLSSAKGALDTLGNRINGLQRQLEHFDLQ) adopt a coiled-coil conformation.

It belongs to the HflD family.

The protein resides in the cytoplasm. The protein localises to the cell inner membrane. In Shigella dysenteriae serotype 1 (strain Sd197), this protein is High frequency lysogenization protein HflD homolog.